The primary structure comprises 151 residues: Endoribonuclease YbeY (151 aa).

Zn(2+)-binding residues include histidine 114, histidine 118, and histidine 124.

This sequence belongs to the endoribonuclease YbeY family. The cofactor is Zn(2+).

It is found in the cytoplasm. Functionally, single strand-specific metallo-endoribonuclease involved in late-stage 70S ribosome quality control and in maturation of the 3' terminus of the 16S rRNA. This chain is Endoribonuclease YbeY, found in Hamiltonella defensa subsp. Acyrthosiphon pisum (strain 5AT).